We begin with the raw amino-acid sequence, 316 residues long: MQILLANPRGFCAGVDRAISIVERALELFGTPIYVRHEVVHNRYVVNGLRERGAIFIEQIEDVPDGAILIFSAHGVSQAVRNEAKSRDLTVFDATCPLVTKVHMEVARASKKGIEAILIGHAGHPEVEGTMGQYSNADGGMYLVESPEDVWQLQVKDESNLCFMTQTTLSVDDTYAVIDALRERFPQIVGPRKDDICYATTNRQEAVRHLSDKADVVFVVGSKNSSNSNRLAELAQRAGKAAYLIDSAEDIQESWVEGASHVGVTAGASAPDILVQQVIQRLKALGGKVAVEMQGREENIVFEVPKELRVEVKQVD.

Residue cysteine 12 coordinates [4Fe-4S] cluster. (2E)-4-hydroxy-3-methylbut-2-enyl diphosphate-binding residues include histidine 41 and histidine 74. Residues histidine 41 and histidine 74 each coordinate dimethylallyl diphosphate. Residues histidine 41 and histidine 74 each contribute to the isopentenyl diphosphate site. Cysteine 96 lines the [4Fe-4S] cluster pocket. Histidine 124 contacts (2E)-4-hydroxy-3-methylbut-2-enyl diphosphate. Position 124 (histidine 124) interacts with dimethylallyl diphosphate. Histidine 124 serves as a coordination point for isopentenyl diphosphate. The active-site Proton donor is glutamate 126. A (2E)-4-hydroxy-3-methylbut-2-enyl diphosphate-binding site is contributed by threonine 167. A [4Fe-4S] cluster-binding site is contributed by cysteine 197. 4 residues coordinate (2E)-4-hydroxy-3-methylbut-2-enyl diphosphate: serine 225, serine 226, asparagine 227, and serine 269. The dimethylallyl diphosphate site is built by serine 225, serine 226, asparagine 227, and serine 269. Positions 225, 226, 227, and 269 each coordinate isopentenyl diphosphate.

Belongs to the IspH family. Homodimer. [4Fe-4S] cluster serves as cofactor.

The catalysed reaction is isopentenyl diphosphate + 2 oxidized [2Fe-2S]-[ferredoxin] + H2O = (2E)-4-hydroxy-3-methylbut-2-enyl diphosphate + 2 reduced [2Fe-2S]-[ferredoxin] + 2 H(+). It catalyses the reaction dimethylallyl diphosphate + 2 oxidized [2Fe-2S]-[ferredoxin] + H2O = (2E)-4-hydroxy-3-methylbut-2-enyl diphosphate + 2 reduced [2Fe-2S]-[ferredoxin] + 2 H(+). Its pathway is isoprenoid biosynthesis; dimethylallyl diphosphate biosynthesis; dimethylallyl diphosphate from (2E)-4-hydroxy-3-methylbutenyl diphosphate: step 1/1. It participates in isoprenoid biosynthesis; isopentenyl diphosphate biosynthesis via DXP pathway; isopentenyl diphosphate from 1-deoxy-D-xylulose 5-phosphate: step 6/6. In terms of biological role, catalyzes the conversion of 1-hydroxy-2-methyl-2-(E)-butenyl 4-diphosphate (HMBPP) into a mixture of isopentenyl diphosphate (IPP) and dimethylallyl diphosphate (DMAPP). Acts in the terminal step of the DOXP/MEP pathway for isoprenoid precursor biosynthesis. The protein is 4-hydroxy-3-methylbut-2-enyl diphosphate reductase of Pectobacterium carotovorum subsp. carotovorum (strain PC1).